A 423-amino-acid polypeptide reads, in one-letter code: COP9 signalosome complex subunit 3 (423 aa).

An N-acetylalanine modification is found at A2. In terms of domain architecture, PCI spans 197–365 (NFERALYFYE…GMVSFHDNPE (169 aa)). The disordered stretch occupies residues 402 to 423 (QFVQKSMGSQEDDSGNKPSSYS). S407, S410, and S423 each carry phosphoserine.

Belongs to the CSN3 family. In terms of assembly, component of the CSN complex, composed of COPS1/GPS1, COPS2, COPS3, COPS4, COPS5, COPS6, COPS7 (COPS7A or COPS7B), COPS8 and COPS9. In the complex, it probably interacts directly with COPS1, COPS4, COPS8 and COPS9. Interacts with CK2 and PKD. Interacts with the translation initiation factor EIF3S6 and IKBKG. Interacts with ERCC6.

It localises to the cytoplasm. The protein localises to the nucleus. Component of the COP9 signalosome complex (CSN), a complex involved in various cellular and developmental processes. The CSN complex is an essential regulator of the ubiquitin (Ubl) conjugation pathway by mediating the deneddylation of the cullin subunits of SCF-type E3 ligase complexes, leading to decrease the Ubl ligase activity of SCF-type complexes such as SCF, CSA or DDB2. The complex is also involved in phosphorylation of p53/TP53, c-jun/JUN, IkappaBalpha/NFKBIA, ITPK1 and IRF8/ICSBP, possibly via its association with CK2 and PKD kinases. CSN-dependent phosphorylation of TP53 and JUN promotes and protects degradation by the Ubl system, respectively. Essential to maintain the survival of epiblast cells and thus the development of the postimplantation embryo. This is COP9 signalosome complex subunit 3 (COPS3) from Bos taurus (Bovine).